Here is a 56-residue protein sequence, read N- to C-terminus: Small ribosomal subunit protein uS14 (56 aa).

Zn(2+) contacts are provided by C21, C24, C39, and C42.

Belongs to the universal ribosomal protein uS14 family. Zinc-binding uS14 subfamily. In terms of assembly, part of the 30S ribosomal subunit. Zn(2+) serves as cofactor.

Binds 16S rRNA, required for the assembly of 30S particles. This chain is Small ribosomal subunit protein uS14, found in Pyrococcus furiosus (strain ATCC 43587 / DSM 3638 / JCM 8422 / Vc1).